A 62-amino-acid chain; its full sequence is Defensin-like protein A (62 aa).

The N-terminal stretch at 1-26 (MRCVVLFMVSCLLIVLLINHFEEVEA) is a signal peptide. C42 and C52 are oxidised to a cystine.

Belongs to the DEFL family.

Its subcellular location is the secreted. Functionally, truncated and inactivated form of SCRA, a protein involved in male-mediated self-incompatibility when active. Most A.thaliana cultivars contain such an inactive form and thus, are self-fertiles. This is Defensin-like protein A (SCRA) from Arabidopsis thaliana (Mouse-ear cress).